The chain runs to 129 residues: Small ribosomal subunit protein uS9 (129 aa).

The tract at residues 110–129 (VERKKYGKKKARKSFQFSKR) is disordered. Over residues 114–129 (KYGKKKARKSFQFSKR) the composition is skewed to basic residues.

The protein belongs to the universal ribosomal protein uS9 family.

The chain is Small ribosomal subunit protein uS9 from Chlorobaculum parvum (strain DSM 263 / NCIMB 8327) (Chlorobium vibrioforme subsp. thiosulfatophilum).